The primary structure comprises 742 residues: Photosystem I P700 chlorophyll a apoprotein A2 (742 aa).

The next 8 helical transmembrane spans lie at 46–69 (LFST…FHVA), 135–158 (LFQA…LHLQ), 175–199 (LNHH…HVAI), 273–291 (IAHH…GHMY), 336–359 (LHFQ…QHMG), 375–401 (SALY…IFFV), 423–445 (ALIS…IYVH), and 525–543 (FLVH…LILI). Residues Cys-567 and Cys-576 each coordinate [4Fe-4S] cluster. A run of 2 helical transmembrane segments spans residues 583–604 (AMYL…YWHW) and 651–673 (LSPW…MFLI). 3 residues coordinate divinyl chlorophyll a: His-662, Met-670, and Tyr-678. Trp-679 contributes to the phylloquinone binding site. Residues 715 to 735 (LVGLAHFTIGNILTFGAFVIA) traverse the membrane as a helical segment.

Belongs to the PsaA/PsaB family. As to quaternary structure, the PsaA/B heterodimer binds the P700 divinyl chlorophyll special pair and subsequent electron acceptors. PSI consists of a core antenna complex that captures photons, and an electron transfer chain that converts photonic excitation into a charge separation. The cyanobacterial PSI reaction center is composed of one copy each of PsaA,B,C,D,E,F,I,J,K,L,M and X, and forms trimeric complexes. PSI electron transfer chain: 5 divinyl chlorophyll a, 1 divinyl chlorophyll a', 2 phylloquinones and 3 4Fe-4S clusters. PSI core antenna: 90 divinyl chlorophyll a, 22 carotenoids, 3 phospholipids and 1 galactolipid. P700 is a divinyl chlorophyll a/divinyl chlorophyll a' dimer, A0 is one or more divinyl chlorophyll a, A1 is one or both phylloquinones and FX is a shared 4Fe-4S iron-sulfur center. is required as a cofactor.

Its subcellular location is the cellular thylakoid membrane. The enzyme catalyses reduced [plastocyanin] + hnu + oxidized [2Fe-2S]-[ferredoxin] = oxidized [plastocyanin] + reduced [2Fe-2S]-[ferredoxin]. PsaA and PsaB bind P700, the primary electron donor of photosystem I (PSI), as well as the electron acceptors A0, A1 and FX. PSI is a plastocyanin/cytochrome c6-ferredoxin oxidoreductase, converting photonic excitation into a charge separation, which transfers an electron from the donor P700 chlorophyll pair to the spectroscopically characterized acceptors A0, A1, FX, FA and FB in turn. Oxidized P700 is reduced on the lumenal side of the thylakoid membrane by plastocyanin or cytochrome c6. In Prochlorococcus marinus (strain MIT 9312), this protein is Photosystem I P700 chlorophyll a apoprotein A2.